A 690-amino-acid chain; its full sequence is Elongation factor G (690 aa).

A tr-type G domain is found at glutamate 8–leucine 283. GTP contacts are provided by residues alanine 17–threonine 24, aspartate 81–histidine 85, and asparagine 135–aspartate 138.

The protein belongs to the TRAFAC class translation factor GTPase superfamily. Classic translation factor GTPase family. EF-G/EF-2 subfamily.

Its subcellular location is the cytoplasm. Catalyzes the GTP-dependent ribosomal translocation step during translation elongation. During this step, the ribosome changes from the pre-translocational (PRE) to the post-translocational (POST) state as the newly formed A-site-bound peptidyl-tRNA and P-site-bound deacylated tRNA move to the P and E sites, respectively. Catalyzes the coordinated movement of the two tRNA molecules, the mRNA and conformational changes in the ribosome. This is Elongation factor G from Bradyrhizobium sp. (strain BTAi1 / ATCC BAA-1182).